Here is a 488-residue protein sequence, read N- to C-terminus: Facilitated trehalose transporter Tret1-2 homolog (488 aa).

At 1 to 28 (MKILMRADTHVSYSVPAEGTKANFTFSQ) the chain is on the cytoplasmic side. Residues 29–49 (VLAALSVSLCSLVVGFVSAYT) form a helical membrane-spanning segment. Topologically, residues 50-72 (SPALVSMTDRTITSFEVTKDAGS) are extracellular. A helical membrane pass occupies residues 73–93 (WVGGIMPLAALAGGITGGPLI). Residues 94–105 (EYLGRRNTILAT) are Cytoplasmic-facing. The helical transmembrane segment at 106–126 (AVPFIVSSLLIACAVNVIMIL) threads the bilayer. At 127 to 129 (CGR) the chain is on the extracellular side. A helical membrane pass occupies residues 130 to 150 (FLTGFCVGIASLSLPVYLGET). Residues 151-160 (LQPEVRGTLG) are Cytoplasmic-facing. A helical transmembrane segment spans residues 161 to 181 (LLPTALGNIGILVCYVAGSFM). N-linked (GlcNAc...) asparagine glycosylation occurs at Asn-182. The Extracellular segment spans residues 182-184 (NWS). The chain crosses the membrane as a helical span at residues 185 to 205 (ILAFLGAALPVPFLILMIIIP). Residues 206 to 268 (ETPRWFVNRG…ELFKRINLKP (63 aa)) are Cytoplasmic-facing. A helical membrane pass occupies residues 269–289 (LSISLGLMFFQQFSGINAVIF). At 290–305 (YTVQIFKDAGSTIDSN) the chain is on the extracellular side. A helical membrane pass occupies residues 306–326 (LCTIIVGIVNFFATFMGIILI). The Cytoplasmic segment spans residues 327–332 (DRLGRK). A helical membrane pass occupies residues 333-353 (ILLYVSDIAMILTLSILGGFF). The Extracellular portion of the chain corresponds to 354 to 372 (YCKAHGPDVSHLGWLPLSC). A helical transmembrane segment spans residues 373–393 (FVIYILGFSLGFGPIPWLMMG). The Cytoplasmic portion of the chain corresponds to 394 to 402 (EILPAKIRG). The chain crosses the membrane as a helical span at residues 403-423 (PAASVVTAFNWFCTFVVTKTF). The Extracellular segment spans residues 424–433 (QDLTVAMGPH). The helical transmembrane segment at 434 to 454 (GAFWLFGVVCIVGLFFVIIYV) threads the bilayer. Over 455–488 (PETRGKSLEEIERKMMGRVPISAVVNIKPFSFNM) the chain is Cytoplasmic.

The protein belongs to the major facilitator superfamily. Sugar transporter (TC 2.A.1.1) family. Trehalose transporter subfamily.

It is found in the cell membrane. Fails to transport trehalose. This chain is Facilitated trehalose transporter Tret1-2 homolog, found in Drosophila sechellia (Fruit fly).